A 527-amino-acid chain; its full sequence is CTP synthase (527 aa).

An amidoligase domain region spans residues 1–270 (MKYIFVTGGV…ADVLCQLLQL (270 aa)). Ser12 contacts CTP. Position 12 (Ser12) interacts with UTP. ATP contacts are provided by residues 13 to 18 (GLGKGI) and Asp70. Mg(2+) is bound by residues Asp70 and Glu145. CTP is bound by residues 152 to 154 (DIE), 191 to 196 (KTKPTQ), and Lys227. Residues 191 to 196 (KTKPTQ) and Lys227 contribute to the UTP site. In terms of domain architecture, Glutamine amidotransferase type-1 spans 292 to 525 (TIGIVSKYGK…VEACLKNRGK (234 aa)). An L-glutamine-binding site is contributed by Gly349. The active-site Nucleophile; for glutamine hydrolysis is Cys376. Residues 377-380 (LGFQ), Glu400, and Arg455 contribute to the L-glutamine site. Residues His498 and Glu500 contribute to the active site.

It belongs to the CTP synthase family. As to quaternary structure, homotetramer.

The enzyme catalyses UTP + L-glutamine + ATP + H2O = CTP + L-glutamate + ADP + phosphate + 2 H(+). The catalysed reaction is L-glutamine + H2O = L-glutamate + NH4(+). It carries out the reaction UTP + NH4(+) + ATP = CTP + ADP + phosphate + 2 H(+). It functions in the pathway pyrimidine metabolism; CTP biosynthesis via de novo pathway; CTP from UDP: step 2/2. Allosterically activated by GTP, when glutamine is the substrate; GTP has no effect on the reaction when ammonia is the substrate. The allosteric effector GTP functions by stabilizing the protein conformation that binds the tetrahedral intermediate(s) formed during glutamine hydrolysis. Inhibited by the product CTP, via allosteric rather than competitive inhibition. Its function is as follows. Catalyzes the ATP-dependent amination of UTP to CTP with either L-glutamine or ammonia as the source of nitrogen. Regulates intracellular CTP levels through interactions with the four ribonucleotide triphosphates. The chain is CTP synthase from Methanospirillum hungatei JF-1 (strain ATCC 27890 / DSM 864 / NBRC 100397 / JF-1).